A 150-amino-acid polypeptide reads, in one-letter code: 3-dehydroquinate dehydratase (150 aa).

Residue Y26 is the Proton acceptor of the active site. Substrate contacts are provided by N77, H83, and D90. Residue H103 is the Proton donor of the active site. Substrate is bound by residues 104–105 (LS) and R114.

The protein belongs to the type-II 3-dehydroquinase family. Homododecamer.

It catalyses the reaction 3-dehydroquinate = 3-dehydroshikimate + H2O. Its pathway is metabolic intermediate biosynthesis; chorismate biosynthesis; chorismate from D-erythrose 4-phosphate and phosphoenolpyruvate: step 3/7. Catalyzes a trans-dehydration via an enolate intermediate. In Pseudoalteromonas translucida (strain TAC 125), this protein is 3-dehydroquinate dehydratase.